Reading from the N-terminus, the 318-residue chain is tRNA pseudouridine synthase B (318 aa).

D47 (nucleophile) is an active-site residue.

The protein belongs to the pseudouridine synthase TruB family. Type 1 subfamily.

The enzyme catalyses uridine(55) in tRNA = pseudouridine(55) in tRNA. In terms of biological role, responsible for synthesis of pseudouridine from uracil-55 in the psi GC loop of transfer RNAs. This chain is tRNA pseudouridine synthase B, found in Aliivibrio salmonicida (strain LFI1238) (Vibrio salmonicida (strain LFI1238)).